Consider the following 301-residue polypeptide: Methionine aminopeptidase (301 aa).

Substrate is bound at residue His-65. 3 residues coordinate a divalent metal cation: Asp-85, Asp-96, and His-156. His-164 contacts substrate. 2 residues coordinate a divalent metal cation: Glu-189 and Glu-284.

Belongs to the peptidase M24A family. Methionine aminopeptidase archaeal type 2 subfamily. As to quaternary structure, monomer. Co(2+) serves as cofactor. It depends on Zn(2+) as a cofactor. Mn(2+) is required as a cofactor. The cofactor is Fe(2+).

It carries out the reaction Release of N-terminal amino acids, preferentially methionine, from peptides and arylamides.. Its function is as follows. Removes the N-terminal methionine from nascent proteins. The N-terminal methionine is often cleaved when the second residue in the primary sequence is small and uncharged (Met-Ala-, Cys, Gly, Pro, Ser, Thr, or Val). The protein is Methionine aminopeptidase of Saccharolobus solfataricus (strain ATCC 35092 / DSM 1617 / JCM 11322 / P2) (Sulfolobus solfataricus).